Reading from the N-terminus, the 712-residue chain is Methionine--tRNA ligase (712 aa).

Positions Pro20–His30 match the 'HIGH' region motif. The Zn(2+) site is built by Cys151, Cys154, Cys163, and Cys167. The 'KMSKS' region motif lies at Lys334–Thr338. Lys337 is an ATP binding site. Positions Ala559–Ala585 are disordered. One can recognise a tRNA-binding domain in the interval Asp610 to Arg712.

Belongs to the class-I aminoacyl-tRNA synthetase family. MetG type 1 subfamily. In terms of assembly, homodimer. Zn(2+) serves as cofactor.

The protein resides in the cytoplasm. It carries out the reaction tRNA(Met) + L-methionine + ATP = L-methionyl-tRNA(Met) + AMP + diphosphate. Functionally, is required not only for elongation of protein synthesis but also for the initiation of all mRNA translation through initiator tRNA(fMet) aminoacylation. This is Methionine--tRNA ligase from Methanosarcina acetivorans (strain ATCC 35395 / DSM 2834 / JCM 12185 / C2A).